A 44-amino-acid chain; its full sequence is Cytochrome b559 subunit beta (44 aa).

The helical transmembrane segment at 19 to 35 (WLAVHTLGVPTVFFLGA) threads the bilayer. His23 contributes to the heme binding site.

Belongs to the PsbE/PsbF family. As to quaternary structure, heterodimer of an alpha subunit and a beta subunit. PSII is composed of 1 copy each of membrane proteins PsbA, PsbB, PsbC, PsbD, PsbE, PsbF, PsbH, PsbI, PsbJ, PsbK, PsbL, PsbM, PsbT, PsbX, PsbY, PsbZ, Psb30/Ycf12, peripheral proteins PsbO, CyanoQ (PsbQ), PsbU, PsbV and a large number of cofactors. It forms dimeric complexes. Heme b is required as a cofactor.

It is found in the cellular thylakoid membrane. This b-type cytochrome is tightly associated with the reaction center of photosystem II (PSII). PSII is a light-driven water:plastoquinone oxidoreductase that uses light energy to abstract electrons from H(2)O, generating O(2) and a proton gradient subsequently used for ATP formation. It consists of a core antenna complex that captures photons, and an electron transfer chain that converts photonic excitation into a charge separation. This chain is Cytochrome b559 subunit beta, found in Trichodesmium erythraeum (strain IMS101).